Reading from the N-terminus, the 159-residue chain is Trafficking protein particle complex subunit 6A (159 aa).

Phosphoserine is present on S33.

Belongs to the TRAPP small subunits family. BET3 subfamily. In terms of assembly, part of the multisubunit transport protein particle (TRAPP) complex. Heterodimer with TRAPPC3. The heterodimer TRAPPC3-TRAPPC6A interacts with TRAPPC2L. Interacts with TRAPPC2L.

It is found in the golgi apparatus. The protein localises to the cis-Golgi network. It localises to the endoplasmic reticulum. In terms of biological role, may play a role in vesicular transport during the biogenesis of melanosomes. This chain is Trafficking protein particle complex subunit 6A, found in Homo sapiens (Human).